A 352-amino-acid chain; its full sequence is MINYQSIKPWLFKLEPEDAHMLAEAALRIPNVCQVAFNPFLESHFITNSILKQELFGRTFFNPIGLGAGFDKNATMIRAMQILGFGFTEIGTITPKAQAGNPKPRMFRHIEEQSIQNAMGFNNEGLLSAQKRLKKRFPFTTPIGINIGKNKLTPDTQAINDYTTLIKALHELGDYLVINISSPNTPGLRDLQNEEFITKLFEESKAITSKPILLKIAPDMSKEDAVALTKLAVLKGADGIIATNTTVDYSLVKEPKSIGGLSGAVLKEKSFEIFEAVAKELYGKTTLISVGGISSAKEVYRRIKAGASLVQIYSGLIYEGPDLIKNINNELTELIKADGYTNITQAIGADRK.

FMN is bound by residues 68 to 72 (AGFDK) and Thr92. Residue Lys72 participates in substrate binding. Residue 117 to 121 (NAMGF) coordinates substrate. FMN is bound by residues Asn146 and Asn179. Asn179 lines the substrate pocket. The active-site Nucleophile is Ser182. Asn184 is a binding site for substrate. Residues Lys215 and Thr243 each coordinate FMN. A substrate-binding site is contributed by 244 to 245 (NT). Residues Gly263, Gly292, and 313-314 (YS) contribute to the FMN site.

It belongs to the dihydroorotate dehydrogenase family. Type 2 subfamily. Monomer. FMN serves as cofactor.

It localises to the cell membrane. It catalyses the reaction (S)-dihydroorotate + a quinone = orotate + a quinol. The protein operates within pyrimidine metabolism; UMP biosynthesis via de novo pathway; orotate from (S)-dihydroorotate (quinone route): step 1/1. In terms of biological role, catalyzes the conversion of dihydroorotate to orotate with quinone as electron acceptor. The polypeptide is Dihydroorotate dehydrogenase (quinone) (Sulfurimonas denitrificans (strain ATCC 33889 / DSM 1251) (Thiomicrospira denitrificans (strain ATCC 33889 / DSM 1251))).